We begin with the raw amino-acid sequence, 33 residues long: MNLEIVFQLTALLFVVAAGPLVIVLLASRGGNL.

Residues 5–25 (IVFQLTALLFVVAAGPLVIVL) traverse the membrane as a helical segment.

It belongs to the Psb30/Ycf12 family. As to quaternary structure, PSII is composed of 1 copy each of membrane proteins PsbA, PsbB, PsbC, PsbD, PsbE, PsbF, PsbH, PsbI, PsbJ, PsbK, PsbL, PsbM, PsbT, PsbX, PsbY, PsbZ, Psb30/Ycf12, peripheral proteins of the oxygen-evolving complex and a large number of cofactors. It forms dimeric complexes.

The protein localises to the plastid. Its subcellular location is the chloroplast thylakoid membrane. In terms of biological role, a core subunit of photosystem II (PSII), probably helps stabilize the reaction center. This is Photosystem II reaction center protein Psb30 from Chlorella vulgaris (Green alga).